We begin with the raw amino-acid sequence, 461 residues long: Argininosuccinate lyase (461 aa).

The protein belongs to the lyase 1 family. Argininosuccinate lyase subfamily.

The protein resides in the cytoplasm. The enzyme catalyses 2-(N(omega)-L-arginino)succinate = fumarate + L-arginine. It participates in amino-acid biosynthesis; L-arginine biosynthesis; L-arginine from L-ornithine and carbamoyl phosphate: step 3/3. Strongly inhibited by L-arginine. Inhibitory effects are lowered at pH 7.0 compared to those at pH 8.0. At 42 degrees Celsius and pH 8.0, activity decreases to 77% and 25% in the presence of 1 mM and 10 mM arginine, respectively. The other amino and organic acids do not affect activity. Its function is as follows. Catalyzes the last step of arginine biosynthesis, the conversion of argininosuccinate into L-arginine and fumarate. The polypeptide is Argininosuccinate lyase (Nostoc sp. (strain PCC 7120 / SAG 25.82 / UTEX 2576)).